The chain runs to 331 residues: D-alanine--D-alanine ligase (331 aa).

Residues 122 to 328 (KLWYDAIGIP…FHEFLADCIE (207 aa)) enclose the ATP-grasp domain. ATP is bound at residue 152–207 (AFDKWGKLFVKAARQGSSVGCYSVTNIEQLSDAIDKAFGFSHQVLVEKAVKPRELE). Residues aspartate 282, glutamate 295, and asparagine 297 each coordinate Mg(2+).

Belongs to the D-alanine--D-alanine ligase family. It depends on Mg(2+) as a cofactor. Mn(2+) is required as a cofactor.

The protein resides in the cytoplasm. The enzyme catalyses 2 D-alanine + ATP = D-alanyl-D-alanine + ADP + phosphate + H(+). It functions in the pathway cell wall biogenesis; peptidoglycan biosynthesis. In terms of biological role, cell wall formation. This chain is D-alanine--D-alanine ligase, found in Vibrio vulnificus (strain YJ016).